We begin with the raw amino-acid sequence, 374 residues long: Ribosomal RNA large subunit methyltransferase G (374 aa).

It belongs to the methyltransferase superfamily. RlmG family.

The protein localises to the cytoplasm. The enzyme catalyses guanosine(1835) in 23S rRNA + S-adenosyl-L-methionine = N(2)-methylguanosine(1835) in 23S rRNA + S-adenosyl-L-homocysteine + H(+). Functionally, specifically methylates the guanine in position 1835 (m2G1835) of 23S rRNA. The polypeptide is Ribosomal RNA large subunit methyltransferase G (Pseudomonas aeruginosa (strain ATCC 15692 / DSM 22644 / CIP 104116 / JCM 14847 / LMG 12228 / 1C / PRS 101 / PAO1)).